The sequence spans 227 residues: UPF0173 metal-dependent hydrolase Tlet_1100 (227 aa).

It belongs to the UPF0173 family.

The polypeptide is UPF0173 metal-dependent hydrolase Tlet_1100 (Pseudothermotoga lettingae (strain ATCC BAA-301 / DSM 14385 / NBRC 107922 / TMO) (Thermotoga lettingae)).